The chain runs to 619 residues: Dihydroxy-acid dehydratase (619 aa).

D80 provides a ligand contact to Mg(2+). C121 provides a ligand contact to [2Fe-2S] cluster. Residues D122 and K123 each contribute to the Mg(2+) site. K123 is subject to N6-carboxylysine. C196 serves as a coordination point for [2Fe-2S] cluster. Residue E492 participates in Mg(2+) binding. The active-site Proton acceptor is the S518.

The protein belongs to the IlvD/Edd family. As to quaternary structure, homodimer. [2Fe-2S] cluster serves as cofactor. Requires Mg(2+) as cofactor.

The catalysed reaction is (2R)-2,3-dihydroxy-3-methylbutanoate = 3-methyl-2-oxobutanoate + H2O. It catalyses the reaction (2R,3R)-2,3-dihydroxy-3-methylpentanoate = (S)-3-methyl-2-oxopentanoate + H2O. It participates in amino-acid biosynthesis; L-isoleucine biosynthesis; L-isoleucine from 2-oxobutanoate: step 3/4. The protein operates within amino-acid biosynthesis; L-valine biosynthesis; L-valine from pyruvate: step 3/4. In terms of biological role, functions in the biosynthesis of branched-chain amino acids. Catalyzes the dehydration of (2R,3R)-2,3-dihydroxy-3-methylpentanoate (2,3-dihydroxy-3-methylvalerate) into 2-oxo-3-methylpentanoate (2-oxo-3-methylvalerate) and of (2R)-2,3-dihydroxy-3-methylbutanoate (2,3-dihydroxyisovalerate) into 2-oxo-3-methylbutanoate (2-oxoisovalerate), the penultimate precursor to L-isoleucine and L-valine, respectively. The polypeptide is Dihydroxy-acid dehydratase (Bifidobacterium adolescentis (strain ATCC 15703 / DSM 20083 / NCTC 11814 / E194a)).